The chain runs to 137 residues: MLSPKKTKYRKQHRGRMKGKAQRGNKIAYGGFALQAIQPCWITSRQIEAGRRVLTRFVRRGGKLWIRIFPDKPITMRASGTRMGSGKGSPQYWVAVVKPGRILYEIKGISIKLATRALKIAGYKMPIQTKILKPFEN.

The disordered stretch occupies residues 1 to 21; the sequence is MLSPKKTKYRKQHRGRMKGKA.

The protein belongs to the universal ribosomal protein uL16 family. Part of the 50S ribosomal subunit.

The protein localises to the plastid. Its subcellular location is the chloroplast. In Oedogonium cardiacum (Filamentous green alga), this protein is Large ribosomal subunit protein uL16c.